Here is a 121-residue protein sequence, read N- to C-terminus: Large ribosomal subunit protein bL12 (121 aa).

The protein belongs to the bacterial ribosomal protein bL12 family. As to quaternary structure, homodimer. Part of the ribosomal stalk of the 50S ribosomal subunit. Forms a multimeric L10(L12)X complex, where L10 forms an elongated spine to which 2 to 4 L12 dimers bind in a sequential fashion. Binds GTP-bound translation factors.

Its function is as follows. Forms part of the ribosomal stalk which helps the ribosome interact with GTP-bound translation factors. Is thus essential for accurate translation. In Clostridium novyi (strain NT), this protein is Large ribosomal subunit protein bL12.